The primary structure comprises 833 residues: MNNLSSQNIGTSLDFQESPGEFEEEEEREEDDSSEISSLPPLTQVATASPRMIVSPKMQNIHLIIQNEDNDSSEVNTPHEDWHANLGLGIQSQPLRNERNVEEHYRTRAKRQTILWAENQAEEDTMTQERVRAEAELQVKFEGARAKAEARAEAEASSRAGLSTGVNGANRTVEDTKSTGEQDEMTRKTAERERRLRAEKERLLIEEDARKKAVQVKLEKEKEEEEEGKAAAGRTTAAPETPEDQEAQRIAVEIVQGIYKKISHTEYANFLGTKENHRILKRFIILLEPLPNSLVLSLYKLVTRIYFIAEAQAIDRILEELSIRWTTTNPATHWGSHYNLCHIVLFSLLILNSDLHNAENNQPKFSKEEFTENTLFAVEKESSKSNFDLAQHEPGIREELGVYYEALKYMSLPLLKKDENKTNVRDSRDSKDTRIRIRRRNSKMSTRSQLNNSTENSSSDDDTSVISSSSPSARREPHYTSNWKFHHNKPLPRLYRKEPLDEVFVFSNGTSWCVDSGIKMNERDLASSSNNKSTAQRTTRSRIPSSAGGIFRWITRSKSKSLLHGNKSPVAFFDGNTKWINVRCRVCEGRIYVFKHYPPSMGPQNSMQDLDGMKKASDVYFVCSLYESLATLVQDNVVVNNNHEPSRRGDLDQRGNFTVIIPASLHRKKTLLEFQTSNVEEAQRFVQCVNFWAARLTPVPTAQFEIVSNEENGWSPRVLSGDLPIETLETLYLSDWRPLLSISHLYSEQENSTEETNMVDKIEVLESFAEYLQRTIDSHNTVKPLMISRWRRTRNFERAMDNWNKKYLYLNELNERTSVYLNALQLAQRSVKH.

A compositionally biased stretch (polar residues) spans 1–15 (MNNLSSQNIGTSLDF). Disordered regions lie at residues 1–51 (MNNL…ASPR), 152–194 (AEAE…ERER), 215–246 (QVKLEKEKEEEEEGKAAAGRTTAAPETPEDQE), and 420–483 (NKTN…TSNW). Positions 20 to 34 (GEFEEEEEREEDDSS) are enriched in acidic residues. Residues 172–194 (TVEDTKSTGEQDEMTRKTAERER) are compositionally biased toward basic and acidic residues. The SEC7 domain occupies 185–410 (MTRKTAERER…GVYYEALKYM (226 aa)). The span at 230 to 240 (AAAGRTTAAPE) shows a compositional bias: low complexity. Basic and acidic residues predominate over residues 420–435 (NKTNVRDSRDSKDTRI). In terms of domain architecture, PH spans 548–696 (GGIFRWITRS…QCVNFWAARL (149 aa)).

Belongs to the YEL1 family.

It is found in the cytoplasm. Its subcellular location is the cell membrane. The protein resides in the bud neck. It localises to the bud tip. Guanine nucleotide exchange factor for ARF3 required for localization of ARF3 to the bud neck and tip and involved in actin patch polarization. The sequence is that of Guanine-nucleotide exchange factor YEL1 (YEL1) from Zygosaccharomyces rouxii (strain ATCC 2623 / CBS 732 / NBRC 1130 / NCYC 568 / NRRL Y-229).